Reading from the N-terminus, the 139-residue chain is Endoribonuclease YbeY (139 aa).

His-107, His-111, and Asp-117 together coordinate Zn(2+).

Belongs to the endoribonuclease YbeY family. Requires Zn(2+) as cofactor.

The protein resides in the cytoplasm. Single strand-specific metallo-endoribonuclease involved in late-stage 70S ribosome quality control and in maturation of the 3' terminus of the 16S rRNA. This is Endoribonuclease YbeY from Bacteroides fragilis (strain ATCC 25285 / DSM 2151 / CCUG 4856 / JCM 11019 / LMG 10263 / NCTC 9343 / Onslow / VPI 2553 / EN-2).